The primary structure comprises 129 residues: GRGLLPFVLLALGIXAPWAVEGAENALKGGACPPRKIVQCLRYEKPKCTSDWQCPDKKKCCRDTCAIKCLNPVAITNPVKVKPGKCPVVYGQCMMLNPPNHCKTDSQCLGDLKCCKSMCGKVCLTPVKA.

The N-terminal stretch at 1–22 (GRGLLPFVLLALGIXAPWAVEG) is a signal peptide. 2 WAP domains span residues 25-73 (NALK…LNPV) and 79-127 (VKVK…LTPV). 8 disulfide bridges follow: Cys-32–Cys-61, Cys-40–Cys-65, Cys-48–Cys-60, Cys-54–Cys-69, Cys-86–Cys-115, Cys-93–Cys-119, Cys-102–Cys-114, and Cys-108–Cys-123. An elastase inhibitory domain region spans residues 81–129 (VKPGKCPVVYGQCMMLNPPNHCKTDSQCLGDLKCCKSMCGKVCLTPVKA).

Interacts with GRN; interaction protects progranulin from proteolysis. In terms of tissue distribution, found in pregnant endometrium and myometrium, placenta, allantoic fluids, fetal cord blood, and fetal liver. Also found in uterus and lung.

The protein localises to the secreted. In terms of biological role, acid-stable proteinase inhibitor with strong affinities for trypsin, chymotrypsin, elastase, and cathepsin G. Modulates the inflammatory and immune responses after bacterial infection, and after infection by the intracellular parasite L.major. Down-regulates responses to bacterial lipopolysaccharide (LPS). Plays a role in regulating the activation of NF-kappa-B and inflammatory responses. Has antimicrobial activity against mycobacteria, but not against salmonella. Contributes to normal resistance against infection by M.tuberculosis. Required for normal resistance to infection by L.major. Required for normal wound healing, probably by preventing tissue damage by limiting protease activity. Together with ELANE, required for normal differentiation and proliferation of bone marrow myeloid cells. This chain is Antileukoproteinase (SLPI), found in Sus scrofa (Pig).